We begin with the raw amino-acid sequence, 288 residues long: Bifunctional protein FolD (288 aa).

Residues 163–165, Ser188, and Ile229 contribute to the NADP(+) site; that span reads GRS.

The protein belongs to the tetrahydrofolate dehydrogenase/cyclohydrolase family. As to quaternary structure, homodimer.

It catalyses the reaction (6R)-5,10-methylene-5,6,7,8-tetrahydrofolate + NADP(+) = (6R)-5,10-methenyltetrahydrofolate + NADPH. It carries out the reaction (6R)-5,10-methenyltetrahydrofolate + H2O = (6R)-10-formyltetrahydrofolate + H(+). The protein operates within one-carbon metabolism; tetrahydrofolate interconversion. Functionally, catalyzes the oxidation of 5,10-methylenetetrahydrofolate to 5,10-methenyltetrahydrofolate and then the hydrolysis of 5,10-methenyltetrahydrofolate to 10-formyltetrahydrofolate. The chain is Bifunctional protein FolD from Campylobacter curvus (strain 525.92).